The sequence spans 218 residues: 7-cyano-7-deazaguanine synthase 1 (218 aa).

9 to 19 is an ATP binding site; the sequence is YSGGMDSFTVL. Zn(2+) is bound by residues cysteine 185, cysteine 193, cysteine 196, and cysteine 199.

The protein belongs to the QueC family. The cofactor is Zn(2+).

It catalyses the reaction 7-carboxy-7-deazaguanine + NH4(+) + ATP = 7-cyano-7-deazaguanine + ADP + phosphate + H2O + H(+). The protein operates within purine metabolism; 7-cyano-7-deazaguanine biosynthesis. Its function is as follows. Catalyzes the ATP-dependent conversion of 7-carboxy-7-deazaguanine (CDG) to 7-cyano-7-deazaguanine (preQ(0)). This is 7-cyano-7-deazaguanine synthase 1 from Colwellia psychrerythraea (strain 34H / ATCC BAA-681) (Vibrio psychroerythus).